Here is a 757-residue protein sequence, read N- to C-terminus: Polyribonucleotide nucleotidyltransferase (757 aa).

Residues Asp-482 and Asp-488 each contribute to the Mg(2+) site. One can recognise a KH domain in the interval 549–608 (PRMLSFYIDKDKISAAIGSKGKNIRSVCERSNAKIEIGDDGKVSVFATSGTEAEIAKSMM). In terms of domain architecture, S1 motif spans 618–686 (GSIVDVKVVR…KGGCPKLSRR (69 aa)). Over residues 703–714 (EERKDGPNDRDN) the composition is skewed to basic and acidic residues. Positions 703–757 (EERKDGPNDRDNYYNNSFSRKPGGSHHKRPPRPRSGFSNRNRPKFGNNDSSSGFY) are disordered. The span at 725-734 (GGSHHKRPPR) shows a compositional bias: basic residues.

This sequence belongs to the polyribonucleotide nucleotidyltransferase family. The cofactor is Mg(2+).

Its subcellular location is the cytoplasm. It carries out the reaction RNA(n+1) + phosphate = RNA(n) + a ribonucleoside 5'-diphosphate. Its function is as follows. Involved in mRNA degradation. Catalyzes the phosphorolysis of single-stranded polyribonucleotides processively in the 3'- to 5'-direction. This chain is Polyribonucleotide nucleotidyltransferase, found in Wolbachia sp. subsp. Drosophila simulans (strain wRi).